The chain runs to 183 residues: MKAYLALISAAVIGLAACSQEPAAPAAEATPAAEAPASEAPAAEAAPADAAEAPAAGNCAATVESNDNMQFNTKDIQVSKACKEFTITLKHTGTQPKASMGHNLVIAKAEDMDGVFKDGVGAADTDYVKPDDARVVAHTKLIGGGEESSLTLDPAKLADGDYKFACTFPGHGALMNGKVTLVD.

Positions 1 to 17 (MKAYLALISAAVIGLAA) are cleaved as a signal peptide. The N-palmitoyl cysteine moiety is linked to residue C18. C18 carries the S-diacylglycerol cysteine lipid modification. A disordered region spans residues 27-51 (AEATPAAEAPASEAPAAEAAPADAA). The region spanning 57–183 (GNCAATVESN…LMNGKVTLVD (127 aa)) is the Plastocyanin-like domain. H102, C166, H171, and M175 together coordinate Cu cation.

Requires Cu cation as cofactor.

The protein resides in the cell outer membrane. In Neisseria meningitidis serogroup C / serotype 2a (strain ATCC 700532 / DSM 15464 / FAM18), this protein is Outer membrane protein H.8.